A 58-amino-acid chain; its full sequence is MEKLTVKEMSQVVGGKYYGNGVSCNKKGCSVDWGKAIGIIGNNAAANLTTGGKAGWKG.

The propeptide occupies 1 to 15 (MEKLTVKEMSQVVGG). Cys-24 and Cys-29 are joined by a disulfide.

The protein resides in the secreted. Its function is as follows. Bacteriocin. The protein is Enterocin-HF (entHF) of Enterococcus faecium (Streptococcus faecium).